A 440-amino-acid chain; its full sequence is ATP-dependent protease ATPase subunit HslU (440 aa).

Residues Ile-18, 60–65 (GVGKTE), Asp-252, Glu-318, and Arg-390 each bind ATP.

Belongs to the ClpX chaperone family. HslU subfamily. As to quaternary structure, a double ring-shaped homohexamer of HslV is capped on each side by a ring-shaped HslU homohexamer. The assembly of the HslU/HslV complex is dependent on binding of ATP.

The protein localises to the cytoplasm. ATPase subunit of a proteasome-like degradation complex; this subunit has chaperone activity. The binding of ATP and its subsequent hydrolysis by HslU are essential for unfolding of protein substrates subsequently hydrolyzed by HslV. HslU recognizes the N-terminal part of its protein substrates and unfolds these before they are guided to HslV for hydrolysis. The chain is ATP-dependent protease ATPase subunit HslU from Acidithiobacillus ferrooxidans (strain ATCC 23270 / DSM 14882 / CIP 104768 / NCIMB 8455) (Ferrobacillus ferrooxidans (strain ATCC 23270)).